We begin with the raw amino-acid sequence, 182 residues long: Peptidoglycan-recognition protein SB2 (182 aa).

Positions 1 to 17 (MKLQLALVLCGLTLALG) are cleaved as a signal peptide. The 126-residue stretch at 40 to 165 (PVRLIIIHHT…CQTKATACPG (126 aa)) folds into the N-acetylmuramoyl-L-alanine amidase domain. Position 47 (histidine 47) interacts with Zn(2+). Cysteine 54 and cysteine 60 are disulfide-bonded. Asparagine 149 carries N-linked (GlcNAc...) asparagine glycosylation. Zn(2+) contacts are provided by histidine 155 and cysteine 163.

It belongs to the N-acetylmuramoyl-L-alanine amidase 2 family. Requires Zn(2+) as cofactor.

It is found in the secreted. It carries out the reaction Hydrolyzes the link between N-acetylmuramoyl residues and L-amino acid residues in certain cell-wall glycopeptides.. Its function is as follows. N-acetylmuramyl-L-alanine amidase involved in innate immunity by degrading bacterial peptidoglycans (PGN). Probably plays a scavenger role by digesting biologically active PGN into biologically inactive fragments. Has no direct bacteriolytic activity. This chain is Peptidoglycan-recognition protein SB2 (PGRP-SB2), found in Drosophila simulans (Fruit fly).